The chain runs to 424 residues: uncharacterized protein (424 aa).

This is an uncharacterized protein from Orgyia pseudotsugata (Douglas-fir tussock moth).